Reading from the N-terminus, the 77-residue chain is Mu-conotoxin BuIIIA (77 aa).

An N-terminal signal peptide occupies residues 1–22 (MMSKLGVLLTICLLLFPLFALP). Positions 23 to 51 (QDGDQPADRPAERMQDDISSEQNSLLEKR) are excised as a propeptide. The segment at 26–46 (DQPADRPAERMQDDISSEQNS) is disordered. The span at 28–38 (PADRPAERMQD) shows a compositional bias: basic and acidic residues. Cystine bridges form between Cys-56–Cys-67, Cys-57–Cys-73, and Cys-63–Cys-74. Cys-74 carries the cysteine amide modification.

This sequence belongs to the conotoxin M superfamily. In terms of tissue distribution, expressed by the venom duct.

Its subcellular location is the secreted. In terms of biological role, mu-conotoxins block voltage-gated sodium channels (Nav). This synthetic toxin potently blocks rNav1.2/SCN2A, and rNav1.4/SCN4A. It also moderately blocks rNav1.1/SCN1A, rNav1.3/SCN3A, rNav1.5/SCN5A, and mNav1.6/SCN8A. The inhibition is reversible. This Conus bullatus (Bubble cone) protein is Mu-conotoxin BuIIIA.